We begin with the raw amino-acid sequence, 217 residues long: tRNA (guanine-N(7)-)-methyltransferase (217 aa).

Residues Glu-44, Glu-69, Asn-96, and Asp-118 each contribute to the S-adenosyl-L-methionine site. Residue Asp-118 is part of the active site. A substrate-binding site is contributed by Lys-122. The segment at 124–129 is interaction with RNA; sequence RHEKRR. Residues Asp-154 and 191 to 194 contribute to the substrate site; that span reads TEYE.

This sequence belongs to the class I-like SAM-binding methyltransferase superfamily. TrmB family.

The enzyme catalyses guanosine(46) in tRNA + S-adenosyl-L-methionine = N(7)-methylguanosine(46) in tRNA + S-adenosyl-L-homocysteine. It functions in the pathway tRNA modification; N(7)-methylguanine-tRNA biosynthesis. In terms of biological role, catalyzes the formation of N(7)-methylguanine at position 46 (m7G46) in tRNA. In Geobacillus kaustophilus (strain HTA426), this protein is tRNA (guanine-N(7)-)-methyltransferase.